The chain runs to 195 residues: Recombination protein RecR (195 aa).

A C4-type zinc finger spans residues 54–69 (CTICGSYTEDEICSIC). Residues 77–172 (ATICVVGFPQ…NITRLASGLP (96 aa)) form the Toprim domain.

It belongs to the RecR family.

In terms of biological role, may play a role in DNA repair. It seems to be involved in an RecBC-independent recombinational process of DNA repair. It may act with RecF and RecO. The chain is Recombination protein RecR from Treponema denticola (strain ATCC 35405 / DSM 14222 / CIP 103919 / JCM 8153 / KCTC 15104).